The sequence spans 354 residues: Serum paraoxonase/lactonase 3 (354 aa).

The cysteines at positions 42 and 352 are disulfide-linked. A glycan (N-linked (GlcNAc...) asparagine) is linked at Asn50. Glu53 and Asp54 together coordinate Ca(2+). His114 serves as the catalytic Proton acceptor. Ile116 contacts Ca(2+). Position 165 is a phosphoserine (Ser165). Positions 167, 168, 223, 268, and 269 each coordinate Ca(2+). Asn269 and Asn323 each carry an N-linked (GlcNAc...) asparagine glycan.

It belongs to the paraoxonase family. In terms of assembly, homodimer. Ca(2+) serves as cofactor. Post-translationally, glycosylated. The signal sequence is not cleaved.

It is found in the secreted. Its subcellular location is the extracellular space. The enzyme catalyses a phenyl acetate + H2O = a phenol + acetate + H(+). It catalyses the reaction An aryl dialkyl phosphate + H2O = dialkyl phosphate + an aryl alcohol.. The catalysed reaction is an N-acyl-L-homoserine lactone + H2O = an N-acyl-L-homoserine + H(+). Functionally, has low activity towards the organophosphate paraxon and aromatic carboxylic acid esters. Rapidly hydrolyzes lactones such as statin prodrugs (e.g. lovastatin). Hydrolyzes aromatic lactones and 5- or 6-member ring lactones with aliphatic substituents but not simple lactones or those with polar substituents. The polypeptide is Serum paraoxonase/lactonase 3 (Pon3) (Mus musculus (Mouse)).